A 65-amino-acid polypeptide reads, in one-letter code: DNA-directed RNA polymerase subunit Rpo10 (65 aa).

The Zn(2+) site is built by Cys-7, Cys-10, Cys-44, and Cys-45.

Belongs to the archaeal Rpo10/eukaryotic RPB10 RNA polymerase subunit family. Part of the RNA polymerase complex. The cofactor is Zn(2+).

It localises to the cytoplasm. It carries out the reaction RNA(n) + a ribonucleoside 5'-triphosphate = RNA(n+1) + diphosphate. Functionally, DNA-dependent RNA polymerase (RNAP) catalyzes the transcription of DNA into RNA using the four ribonucleoside triphosphates as substrates. This chain is DNA-directed RNA polymerase subunit Rpo10, found in Thermococcus onnurineus (strain NA1).